Here is a 171-residue protein sequence, read N- to C-terminus: Endoribonuclease YbeY (171 aa).

Residues H126, H130, and H136 each contribute to the Zn(2+) site.

Belongs to the endoribonuclease YbeY family. Zn(2+) is required as a cofactor.

It localises to the cytoplasm. In terms of biological role, single strand-specific metallo-endoribonuclease involved in late-stage 70S ribosome quality control and in maturation of the 3' terminus of the 16S rRNA. The polypeptide is Endoribonuclease YbeY (Rhizobium johnstonii (strain DSM 114642 / LMG 32736 / 3841) (Rhizobium leguminosarum bv. viciae)).